Here is a 388-residue protein sequence, read N- to C-terminus: LL-diaminopimelate aminotransferase (388 aa).

Residues Tyr13, Gly38, Lys102, Tyr126, and Asn176 each coordinate substrate. Residues 101 to 102 (SK), Tyr126, Asn176, Tyr207, and 235 to 237 (SLS) each bind pyridoxal 5'-phosphate. At Lys238 the chain carries N6-(pyridoxal phosphate)lysine. Residue Arg246 coordinates pyridoxal 5'-phosphate. Arg364 provides a ligand contact to substrate.

The protein belongs to the class-I pyridoxal-phosphate-dependent aminotransferase family. LL-diaminopimelate aminotransferase subfamily. In terms of assembly, homodimer. The cofactor is pyridoxal 5'-phosphate.

It carries out the reaction (2S,6S)-2,6-diaminopimelate + 2-oxoglutarate = (S)-2,3,4,5-tetrahydrodipicolinate + L-glutamate + H2O + H(+). Its pathway is amino-acid biosynthesis; L-lysine biosynthesis via DAP pathway; LL-2,6-diaminopimelate from (S)-tetrahydrodipicolinate (aminotransferase route): step 1/1. Functionally, involved in the synthesis of meso-diaminopimelate (m-DAP or DL-DAP), required for both lysine and peptidoglycan biosynthesis. Catalyzes the direct conversion of tetrahydrodipicolinate to LL-diaminopimelate. This Dehalococcoides mccartyi (strain ATCC BAA-2266 / KCTC 15142 / 195) (Dehalococcoides ethenogenes (strain 195)) protein is LL-diaminopimelate aminotransferase.